Consider the following 65-residue polypeptide: Small hydrophobic protein (65 aa).

Residues 1–20 (MGNTSITIEFTSKFWPYFTL) are Intravirion-facing. The interval 6–15 (ITIEFTSKFW) is interaction with host BCAP31. Residues 21-44 (IHMILTPISLLIIITIMIAILNKL) form a helical; Signal-anchor for type II membrane protein membrane-spanning segment. Residues 38-43 (IAILNK) form an interaction with small-molecule inhibitor region. Residues 45–65 (SEHKTFCNKTLELGQMYQINT) are Virion surface-facing. N-linked (GlcNAc...) asparagine; by host glycosylation occurs at N52.

This sequence belongs to the orthopneumovirus small hydrophobic protein family. As to quaternary structure, homopentamer forming a funnel-like pore. Interacts with glycoprotein G; this interaction occurs on the surface of virion particles and infected cells. Interacts with host BCAP31 (via C-terminus); this interaction is direct. Four species of SH have been detected in infected cell cytoplasm: a 7.5 kDa non-glycosylated form (SH0), a 13-15 kDa form that contains one or two N-linked carbohydrate side chains of the high-mannose type (SHg), a 21-30 kDa polylactosaminoglycan-modified form of the protein (SHp), and the isoform generated by alternative translational initiation. Of these different forms, SH0 is by far the most abundant protein detected during virus infection. In terms of processing, tyrosine phosphorylated.

The protein resides in the virion membrane. It is found in the host cell membrane. It localises to the host Golgi apparatus membrane. The protein localises to the host endoplasmic reticulum membrane. Its activity is regulated as follows. Channel activity is inhibited by copper. Also inhibited by small-molecule pyronin B. In terms of biological role, viroporin that forms a homopentameric ion channel displaying low ion selectivity. May play a role in virus morphogenesis and pathogenicity at various stages of the viral life cycle. Accumulates at the membrane of the Golgi apparatus in infected cells and may facilitate virus release by modifying the secretory pathway. May enhance host membrane permeability and disrupt cellular ion homeostasis, which can be sensed as damage-associated molecular patterns/danger signals, triggering NLRP3 inflammasome activation and inflammatory immune response. Also inhibits host TNFA-mediated signaling pathway and may delay apoptosis, allowing time for the virus to replicate. This Human respiratory syncytial virus B (strain 18537) protein is Small hydrophobic protein.